The following is a 310-amino-acid chain: tRNA-cytidine(32) 2-sulfurtransferase (310 aa).

Residues Ser-45 to Ser-50 carry the PP-loop motif motif. [4Fe-4S] cluster-binding residues include Cys-120, Cys-123, and Cys-211.

The protein belongs to the TtcA family. As to quaternary structure, homodimer. Mg(2+) serves as cofactor. The cofactor is [4Fe-4S] cluster.

The protein localises to the cytoplasm. The enzyme catalyses cytidine(32) in tRNA + S-sulfanyl-L-cysteinyl-[cysteine desulfurase] + AH2 + ATP = 2-thiocytidine(32) in tRNA + L-cysteinyl-[cysteine desulfurase] + A + AMP + diphosphate + H(+). It functions in the pathway tRNA modification. Catalyzes the ATP-dependent 2-thiolation of cytidine in position 32 of tRNA, to form 2-thiocytidine (s(2)C32). The sulfur atoms are provided by the cysteine/cysteine desulfurase (IscS) system. The chain is tRNA-cytidine(32) 2-sulfurtransferase from Shewanella sp. (strain ANA-3).